A 338-amino-acid polypeptide reads, in one-letter code: Aspartate carbamoyltransferase catalytic subunit (338 aa).

Carbamoyl phosphate contacts are provided by R59 and T60. K87 contacts L-aspartate. R109, H142, and Q145 together coordinate carbamoyl phosphate. L-aspartate contacts are provided by R182 and R253. 2 residues coordinate carbamoyl phosphate: G294 and P295.

It belongs to the aspartate/ornithine carbamoyltransferase superfamily. ATCase family. Heterododecamer (2C3:3R2) of six catalytic PyrB chains organized as two trimers (C3), and six regulatory PyrI chains organized as three dimers (R2).

The enzyme catalyses carbamoyl phosphate + L-aspartate = N-carbamoyl-L-aspartate + phosphate + H(+). It participates in pyrimidine metabolism; UMP biosynthesis via de novo pathway; (S)-dihydroorotate from bicarbonate: step 2/3. Catalyzes the condensation of carbamoyl phosphate and aspartate to form carbamoyl aspartate and inorganic phosphate, the committed step in the de novo pyrimidine nucleotide biosynthesis pathway. The chain is Aspartate carbamoyltransferase catalytic subunit from Prochlorococcus marinus (strain SARG / CCMP1375 / SS120).